Consider the following 344-residue polypeptide: Type II methyltransferase M.FnuDI (344 aa).

The region spanning 1 to 330 is the SAM-dependent MTase C5-type domain; that stretch reads MKLLSLFSGA…KRIKETLTDK (330 aa). Residue Cys-71 is part of the active site.

This sequence belongs to the class I-like SAM-binding methyltransferase superfamily. C5-methyltransferase family.

It carries out the reaction a 2'-deoxycytidine in DNA + S-adenosyl-L-methionine = a 5-methyl-2'-deoxycytidine in DNA + S-adenosyl-L-homocysteine + H(+). In terms of biological role, a methylase, recognizes the double-stranded sequence 5'-GGCC-3', methylates C-? on both strands, and protects the DNA from cleavage by the FnuDI endonuclease. In Fusobacterium nucleatum, this protein is Type II methyltransferase M.FnuDI (fnuDIM).